The primary structure comprises 114 residues: Large ribosomal subunit protein P2 (114 aa).

Residues 74–83 (AAAAGGGGGD) are compositionally biased toward gly residues. The segment at 74–114 (AAAAGGGGGDAPAAAAEEPKKEEKSEEESDEELGFSLFDDN) is disordered. The segment covering 98–114 (SEEESDEELGFSLFDDN) has biased composition (acidic residues).

It belongs to the eukaryotic ribosomal protein P1/P2 family. P1 and P2 exist as dimers at the large ribosomal subunit. Post-translationally, phosphorylated.

Plays an important role in the elongation step of protein synthesis. The protein is Large ribosomal subunit protein P2 of Parthenium argentatum (Guayule rubber plant).